We begin with the raw amino-acid sequence, 142 residues long: Small ribosomal subunit protein uS12 (142 aa).

Belongs to the universal ribosomal protein uS12 family. As to quaternary structure, part of the 30S ribosomal subunit.

With S4 and S5 plays an important role in translational accuracy. Located at the interface of the 30S and 50S subunits. The chain is Small ribosomal subunit protein uS12 from Thermoplasma volcanium (strain ATCC 51530 / DSM 4299 / JCM 9571 / NBRC 15438 / GSS1).